Reading from the N-terminus, the 93-residue chain is Small ribosomal subunit protein uS19 (93 aa).

Belongs to the universal ribosomal protein uS19 family.

Functionally, protein S19 forms a complex with S13 that binds strongly to the 16S ribosomal RNA. This is Small ribosomal subunit protein uS19 from Lawsonia intracellularis (strain PHE/MN1-00).